The primary structure comprises 162 residues: Beta-lactoglobulin (162 aa).

3 disulfide bridges follow: Cys-66–Cys-160, Cys-106–Cys-119, and Cys-106–Cys-121.

The protein belongs to the calycin superfamily. Lipocalin family. In terms of assembly, under physiological conditions beta-lactoglobulin exists as an equilibrium mixture of monomeric and dimeric forms. Alternate disulfide bonds occur in equal amounts.

It is found in the secreted. Lactoglobulin is the primary component of whey, it binds retinol and is probably involved in the transport of that molecule. This is Beta-lactoglobulin (LGB) from Ovis aries musimon (Mouflon).